Consider the following 188-residue polypeptide: Cell division protein SepF (188 aa).

The segment covering 152–162 (TSHDEASTPTV) has biased composition (polar residues). A disordered region spans residues 152-188 (TSHDEASTPTVVSRDAEAEQQQEAAAAPSPAWGATAL).

This sequence belongs to the SepF family. As to quaternary structure, homodimer. Interacts with FtsZ.

The protein resides in the cytoplasm. Cell division protein that is part of the divisome complex and is recruited early to the Z-ring. Probably stimulates Z-ring formation, perhaps through the cross-linking of FtsZ protofilaments. Its function overlaps with FtsA. The protein is Cell division protein SepF of Parasynechococcus marenigrum (strain WH8102).